A 207-amino-acid polypeptide reads, in one-letter code: Testis-expressed protein 35 (207 aa).

Residues 43–79 adopt a coiled-coil conformation; sequence RKGMTRELKNELREVREQLTEKMEEIKQIKDIMDKDF.

Testis-specific. Expressed during spermatogenesis.

It localises to the nucleus. In Mus musculus (Mouse), this protein is Testis-expressed protein 35 (Tex35).